The primary structure comprises 302 residues: Recombination-associated protein RdgC (302 aa).

Belongs to the RdgC family.

It localises to the cytoplasm. Its subcellular location is the nucleoid. In terms of biological role, may be involved in recombination. In Xylella fastidiosa (strain 9a5c), this protein is Recombination-associated protein RdgC.